Reading from the N-terminus, the 141-residue chain is Nucleoside diphosphate kinase (141 aa).

ATP contacts are provided by lysine 11, phenylalanine 59, arginine 87, threonine 93, arginine 104, and asparagine 114. The active-site Pros-phosphohistidine intermediate is histidine 117.

This sequence belongs to the NDK family. In terms of assembly, homotetramer. Mg(2+) serves as cofactor.

Its subcellular location is the cytoplasm. The catalysed reaction is a 2'-deoxyribonucleoside 5'-diphosphate + ATP = a 2'-deoxyribonucleoside 5'-triphosphate + ADP. It catalyses the reaction a ribonucleoside 5'-diphosphate + ATP = a ribonucleoside 5'-triphosphate + ADP. Major role in the synthesis of nucleoside triphosphates other than ATP. The ATP gamma phosphate is transferred to the NDP beta phosphate via a ping-pong mechanism, using a phosphorylated active-site intermediate. The polypeptide is Nucleoside diphosphate kinase (Polynucleobacter necessarius subsp. necessarius (strain STIR1)).